The primary structure comprises 781 residues: Toll-like receptor 2 type-2 (781 aa).

The N-terminal stretch at methionine 1 to arginine 24 is a signal peptide. At glutamine 25–serine 585 the chain is on the extracellular side. Cysteines 30 and 36 form a disulfide. An N-linked (GlcNAc...) asparagine glycan is attached at asparagine 37. LRR repeat units lie at residues lysine 53–lysine 74, asparagine 77–serine 98, lysine 101–proline 122, serine 125–serine 146, asparagine 150–glycine 171, and phenylalanine 174–serine 195. A glycan (N-linked (GlcNAc...) asparagine) is linked at asparagine 109. N-linked (GlcNAc...) asparagine glycans are attached at residues asparagine 150, asparagine 184, asparagine 301, and asparagine 313. A disulfide bridge connects residues cysteine 350 and cysteine 379. LRR repeat units follow at residues serine 358–alanine 378, serine 385–leucine 406, asparagine 411–proline 432, asparagine 434–threonine 455, leucine 456–proline 474, phenylalanine 475–proline 496, and asparagine 497–serine 518. The N-linked (GlcNAc...) asparagine glycan is linked to asparagine 390. An intrachain disulfide couples cysteine 429 to cysteine 451. An N-linked (GlcNAc...) asparagine glycan is attached at asparagine 439. The region spanning asparagine 530–arginine 584 is the LRRCT domain. A helical transmembrane segment spans residues leucine 586–glycine 606. At tyrosine 607–serine 781 the chain is on the cytoplasmic side. The 144-residue stretch at isoleucine 636–leucine 779 folds into the TIR domain.

It belongs to the Toll-like receptor family. In terms of assembly, binds MYD88 (via TIR domain). Post-translationally, N-glycosylated. As to expression, highly expressed in ovary. Also detected in brain, heart, lung, liver, spleen and kidney, and at low levels in gizzard, muscle, testis and proventriculus.

The protein resides in the membrane. Participates in the innate immune response to microbial agents. Acts via MYD88 and TRAF6, leading to NF-kappa-B activation, cytokine secretion and the inflammatory response. Mediates the response to mycoplasmal macrophage-activating lipopeptide-2kD (MALP-2). In Gallus gallus (Chicken), this protein is Toll-like receptor 2 type-2 (TLR2-2).